The primary structure comprises 78 residues: Putative Fe(2+) transport protein A (78 aa).

It belongs to the FeoA family.

Functionally, might be involved in Fe(2+) ion uptake. The polypeptide is Putative Fe(2+) transport protein A (Helicobacter pylori (strain J99 / ATCC 700824) (Campylobacter pylori J99)).